Consider the following 393-residue polypeptide: Cysteine protease ATG4B (393 aa).

Met-1 carries the N-acetylmethionine modification. Ser-34 is modified (phosphoserine). The active-site Nucleophile is Cys-74. Cys-189 carries the S-nitrosocysteine modification. Active-site residues include Asp-278 and His-280. Cys-292 and Cys-301 each carry S-nitrosocysteine. An intrachain disulfide couples Cys-292 to Cys-361. Phosphoserine occurs at positions 316 and 383. The LIR motif lies at 388 to 391 (FEIL). Position 392 is a phosphoserine (Ser-392).

It belongs to the peptidase C54 family. As to quaternary structure, interacts with PFKP; promoting phosphorylation of ATG4B at Ser-34. Interacts with GBP7. In terms of processing, phosphorylation at Ser-383 and Ser-392 promotes autophagy by increasing protein delipidation activity without affecting proteolytic activation of ATG8 proteins. Phosphorylation at Ser-316 by ULK1 inhibits autophagy by decreasing both proteolytic activation and delipidation activities. Phosphorylation at Ser-316 is dephosphorylated by protein phosphatase 2A (PP2A). Phosphorylation at Ser-34 by AKT2 promotes its hydrolase activity, leading to increased proteolytic activation and delipidation of ATG8 family proteins. Phosphorylation at Ser-34 by AKT1 promotes mitochondrial localization and inhibition of the F1F0-ATP synthase activity, leading to elevation of mitochondrial reactive oxygen species (ROS). Ubiquitinated by RNF5, leading to its degradation by the proteasome. Post-translationally, S-nitrosylation at Cys-189 and Cys-292 in response to high glucose decreases both proteolytic activation and delipidation activities. In terms of processing, O-glycosylated by OGT, leading to increase protease activity, thereby promoting the proteolytic activation of ATG8 family proteins. Forms reversible intrachain disulfide bonds in response to oxidative stress. Forms interchain disulfide bonds, leading to formation of homooligomers in response to oxidation.

The protein resides in the cytoplasm. It is found in the cytosol. It localises to the cytoplasmic vesicle. Its subcellular location is the autophagosome. The protein localises to the endoplasmic reticulum. The protein resides in the mitochondrion. The enzyme catalyses [protein]-C-terminal L-amino acid-glycyl-phosphatidylethanolamide + H2O = [protein]-C-terminal L-amino acid-glycine + a 1,2-diacyl-sn-glycero-3-phosphoethanolamine. The catalysed reaction is [protein]-C-terminal L-amino acid-glycyl-phosphatidylserine + H2O = [protein]-C-terminal L-amino acid-glycine + a 1,2-diacyl-sn-glycero-3-phospho-L-serine. Its activity is regulated as follows. Inhibited by N-ethylmaleimide. Redox-regulated during autophagy since reducing conditions activate ATG4A whereas an oxidizing environment such as the presence of H(2)O(2) inhibits its activity. The cysteine protease activity compounds is inhibited by styrylquinoline compounds 4-28 and LV-320. In terms of biological role, cysteine protease that plays a key role in autophagy by mediating both proteolytic activation and delipidation of ATG8 family proteins. Required for canonical autophagy (macroautophagy), non-canonical autophagy as well as for mitophagy. The protease activity is required for proteolytic activation of ATG8 family proteins: cleaves the C-terminal amino acid of ATG8 proteins MAP1LC3A, MAP1LC3B, MAP1LC3C, GABARAPL1, GABARAPL2 and GABARAP, to reveal a C-terminal glycine. Exposure of the glycine at the C-terminus is essential for ATG8 proteins conjugation to phosphatidylethanolamine (PE) and insertion to membranes, which is necessary for autophagy. Protease activity is also required to counteract formation of high-molecular weight conjugates of ATG8 proteins (ATG8ylation): acts as a deubiquitinating-like enzyme that removes ATG8 conjugated to other proteins, such as ATG3. In addition to the protease activity, also mediates delipidation of ATG8 family proteins. Catalyzes delipidation of PE-conjugated forms of ATG8 proteins during macroautophagy. Also involved in non-canonical autophagy, a parallel pathway involving conjugation of ATG8 proteins to single membranes at endolysosomal compartments, by catalyzing delipidation of ATG8 proteins conjugated to phosphatidylserine (PS). Compared to other members of the family (ATG4A, ATG4C or ATG4C), constitutes the major protein for proteolytic activation of ATG8 proteins, while it displays weaker delipidation activity than other ATG4 paralogs. Involved in phagophore growth during mitophagy independently of its protease activity and of ATG8 proteins: acts by regulating ATG9A trafficking to mitochondria and promoting phagophore-endoplasmic reticulum contacts during the lipid transfer phase of mitophagy. (Microbial infection) Mediates cleavage of an ATG8 protein homolog coded in the genome of cytopathogenic bovine viral diarrhea virus (BVDV). This chain is Cysteine protease ATG4B (ATG4B), found in Bos taurus (Bovine).